Here is a 124-residue protein sequence, read N- to C-terminus: Putative membrane protein insertion efficiency factor (124 aa).

The segment at 1–24 is disordered; sequence MHDPHGHAHTVRPPGRGRNWPGPW. The span at 12-24 shows a compositional bias: low complexity; that stretch reads RPPGRGRNWPGPW.

Belongs to the UPF0161 family.

It is found in the cell inner membrane. Could be involved in insertion of integral membrane proteins into the membrane. In Mesorhizobium japonicum (strain LMG 29417 / CECT 9101 / MAFF 303099) (Mesorhizobium loti (strain MAFF 303099)), this protein is Putative membrane protein insertion efficiency factor.